The chain runs to 607 residues: Monocarboxylate transporter 7 (607 aa).

Positions 1–84 are disordered; sequence MRASGQGPQR…PAETGCSRSR (84 aa). Over 1–105 the chain is Cytoplasmic; it reads MRASGQGPQR…ANVYTQVPDG (105 aa). The helical transmembrane segment at 106–126 threads the bilayer; that stretch reads GWGWAVAVSFFFVEVFTYGII. The Extracellular portion of the chain corresponds to 127–146; sequence KSFGVFFNDLMDSFDESNSK. Residues 147-167 form a helical membrane-spanning segment; it reads ISWIISICVFVLTFTAPLSTV. Topologically, residues 168–175 are cytoplasmic; that stretch reads LSNRFGHR. Residues 176 to 196 form a helical membrane-spanning segment; that stretch reads LVVMAGGLLISLGMITASFSQ. The Extracellular portion of the chain corresponds to 197 to 202; sequence RVYHMY. Residues 203-223 form a helical membrane-spanning segment; the sequence is ISIGVISGLGYCFSFLPTVTI. Over 224–233 the chain is Cytoplasmic; sequence LSQYFDKRRS. The chain crosses the membrane as a helical span at residues 234–254; it reads VVTAVASTGECFAVFAFAPAI. Over 255-268 the chain is Extracellular; that stretch reads TALKEHIGWRYSLL. A helical transmembrane segment spans residues 269-289; it reads FVGLLQLNIMVCGALLRPIII. The Cytoplasmic segment spans residues 290 to 383; that stretch reads QGPGQSPKAV…KEKSFICYAL (94 aa). Ser-319, Ser-322, Ser-325, and Ser-332 each carry phosphoserine. Residues 384-404 traverse the membrane as a helical segment; sequence FGLFATLGFFAPSLYIIPLGI. Residues 405–414 are Extracellular-facing; that stretch reads SLGIDPDRAA. The chain crosses the membrane as a helical span at residues 415-435; the sequence is FLLSTMAIAEVFGRIGAGFVL. Residues 436 to 442 lie on the Cytoplasmic side of the membrane; sequence NREPIRK. The helical transmembrane segment at 443 to 463 threads the bilayer; sequence IYIELICVILLTASLFAFTFA. The Extracellular portion of the chain corresponds to 464 to 465; it reads TE. Residues 466-486 form a helical membrane-spanning segment; it reads FWGLMLCSVFFGSMVGTIGGT. The Cytoplasmic portion of the chain corresponds to 487–507; that stretch reads HIPMLAEDDVVGIEKMSSAAG. A helical membrane pass occupies residues 508–528; sequence VYVFIQSISGLAGPPLAGLLV. Residues 529–536 lie on the Extracellular side of the membrane; sequence DQSKIYSR. Residues 537 to 557 form a helical membrane-spanning segment; that stretch reads AFYSCAAGMCLAAVCLALVRP. Residues 558 to 607 are Cytoplasmic-facing; the sequence is CKKGLCQNSHSGENQTDRQRGKALQDIPEDFLEMDLGKCEHRAHMKMDPV.

It belongs to the major facilitator superfamily. Monocarboxylate porter (TC 2.A.1.13) family. In terms of assembly, forms functional complexes with BSG/CD147 or EMB/GP70 ancillary proteins.

The protein localises to the basolateral cell membrane. The enzyme catalyses taurine(out) = taurine(in). Its function is as follows. Monocarboxylate transporter selective for taurine. May associate with BSG/CD147 or EMB/GP70 ancillary proteins to mediate facilitative efflux or influx of taurine across the plasma membrane. The transport is pH- and sodium-independent. Rather low-affinity, is likely effective for taurine transport in tissues where taurine is present at high concentrations. This is Monocarboxylate transporter 7 from Mus musculus (Mouse).